Here is a 182-residue protein sequence, read N- to C-terminus: Large ribosomal subunit protein bL25 (182 aa).

Belongs to the bacterial ribosomal protein bL25 family. CTC subfamily. In terms of assembly, part of the 50S ribosomal subunit; part of the 5S rRNA/L5/L18/L25 subcomplex. Contacts the 5S rRNA. Binds to the 5S rRNA independently of L5 and L18.

In terms of biological role, this is one of the proteins that binds to the 5S RNA in the ribosome where it forms part of the central protuberance. This chain is Large ribosomal subunit protein bL25, found in Borreliella afzelii (strain PKo) (Borrelia afzelii).